We begin with the raw amino-acid sequence, 77 residues long: UPF0337 protein CE0198 (77 aa).

The tract at residues 1–77 is disordered; it reads MGDLSNKAEG…PDVEHPEAVN (77 aa). Composition is skewed to basic and acidic residues over residues 30-56 and 64-77; these read DEGRADQTKADIKEAVSDAGDKIKDGA and QDKDPDVEHPEAVN.

Belongs to the UPF0337 (CsbD) family.

This Corynebacterium efficiens (strain DSM 44549 / YS-314 / AJ 12310 / JCM 11189 / NBRC 100395) protein is UPF0337 protein CE0198.